The sequence spans 406 residues: Acetylornithine aminotransferase (406 aa).

Pyridoxal 5'-phosphate is bound by residues 113–114 (GT) and F145. R148 lines the N(2)-acetyl-L-ornithine pocket. A pyridoxal 5'-phosphate-binding site is contributed by 233–236 (DEIQ). K262 is modified (N6-(pyridoxal phosphate)lysine). S290 contributes to the N(2)-acetyl-L-ornithine binding site. T291 contacts pyridoxal 5'-phosphate.

The protein belongs to the class-III pyridoxal-phosphate-dependent aminotransferase family. ArgD subfamily. As to quaternary structure, homodimer. Pyridoxal 5'-phosphate is required as a cofactor.

It is found in the cytoplasm. It catalyses the reaction N(2)-acetyl-L-ornithine + 2-oxoglutarate = N-acetyl-L-glutamate 5-semialdehyde + L-glutamate. It functions in the pathway amino-acid biosynthesis; L-arginine biosynthesis; N(2)-acetyl-L-ornithine from L-glutamate: step 4/4. This is Acetylornithine aminotransferase from Leptospira interrogans serogroup Icterohaemorrhagiae serovar Lai (strain 56601).